Here is a 290-residue protein sequence, read N- to C-terminus: Large ribosomal subunit protein uL2m (290 aa).

The protein belongs to the universal ribosomal protein uL2 family. In terms of assembly, probably part of the large ribosomal subunit.

It localises to the hydrogenosome. This Nyctotherus ovalis protein is Large ribosomal subunit protein uL2m (rpl2).